Consider the following 260-residue polypeptide: 5'-nucleotidase SurE (260 aa).

The a divalent metal cation site is built by Asp-13, Asp-14, Ser-44, and Asn-102.

Belongs to the SurE nucleotidase family. A divalent metal cation serves as cofactor.

The protein resides in the cytoplasm. The catalysed reaction is a ribonucleoside 5'-phosphate + H2O = a ribonucleoside + phosphate. Nucleotidase that shows phosphatase activity on nucleoside 5'-monophosphates. This chain is 5'-nucleotidase SurE, found in Christiangramia forsetii (strain DSM 17595 / CGMCC 1.15422 / KT0803) (Gramella forsetii).